The sequence spans 432 residues: Gamma-glutamyl phosphate reductase (432 aa).

The protein belongs to the gamma-glutamyl phosphate reductase family.

It localises to the cytoplasm. The enzyme catalyses L-glutamate 5-semialdehyde + phosphate + NADP(+) = L-glutamyl 5-phosphate + NADPH + H(+). It functions in the pathway amino-acid biosynthesis; L-proline biosynthesis; L-glutamate 5-semialdehyde from L-glutamate: step 2/2. Catalyzes the NADPH-dependent reduction of L-glutamate 5-phosphate into L-glutamate 5-semialdehyde and phosphate. The product spontaneously undergoes cyclization to form 1-pyrroline-5-carboxylate. This is Gamma-glutamyl phosphate reductase from Methylobacterium radiotolerans (strain ATCC 27329 / DSM 1819 / JCM 2831 / NBRC 15690 / NCIMB 10815 / 0-1).